The primary structure comprises 459 residues: MLKIFNTLTREKEVFKPISENKVGMYVCGVTVYDLCHIGHGRTFVCFDVIARYLRYLGYELTYVRNITDVDDKIIRRSLENRETCEQLVDRMVVEMYKDFDALNVLRPDFEPRATHHIAEIIALVEKLIARGHAYVADNGDVMFDVESFKEYGKLSRQDLTQLQAGARVEISEIKKNPMDFVLWKMSKENEPSWNSPWGAGRPGWHIECSAMNCKHLGEHFDIHGGGSDLMFPHHENEIAQSCCAHGNRYVNYWIHSGMIMVDKEKMSKSLGNFFTIRDVLNHYDAESVRYFLLTAHYRSQLNYSEENLDLAHGALERLYTALRGTDKSAVAFGGENFIAQFTEAMNDDFNTPNAISVLFEMAREINRLKNEDKLLADGLAARLRELAGILGLLEQDPEDFLQAGSDDAEIAKIEALIKQRNDARQAKDWARADAARNELTTMGVILEDGSNGTMWRKM.

Residue C28 coordinates Zn(2+). A 'HIGH' region motif is present at residues 30–40 (VTVYDLCHIGH). Zn(2+) contacts are provided by C209, H234, and E238. A 'KMSKS' region motif is present at residues 266 to 270 (KMSKS). K269 contributes to the ATP binding site.

This sequence belongs to the class-I aminoacyl-tRNA synthetase family. As to quaternary structure, monomer. Zn(2+) is required as a cofactor.

It localises to the cytoplasm. It carries out the reaction tRNA(Cys) + L-cysteine + ATP = L-cysteinyl-tRNA(Cys) + AMP + diphosphate. This chain is Cysteine--tRNA ligase, found in Histophilus somni (strain 129Pt) (Haemophilus somnus).